The sequence spans 701 residues: UvrABC system protein B (701 aa).

The Helicase ATP-binding domain occupies 35–422; that stretch reads RRIQGGAADT…GGDVVEQVIR (388 aa). 48–55 is an ATP binding site; the sequence is GATGTGKT. Residues 101 to 124 carry the Beta-hairpin motif; it reads YYDYYQPEAYVPQTDTYIEKDSSI. Residues 439–605 enclose the Helicase C-terminal domain; the sequence is QIDDLVHEIR…PLRKKIADIL (167 aa). The segment at 620–648 is disordered; that stretch reads ARSRGEKRGTPTPRSGALSGPDRVAEQAK. One can recognise a UVR domain in the interval 656-691; that stretch reads AALVEQLTEQMHQAAADLQFELAARLRDEIKELKRE.

This sequence belongs to the UvrB family. As to quaternary structure, forms a heterotetramer with UvrA during the search for lesions. Interacts with UvrC in an incision complex.

The protein localises to the cytoplasm. The UvrABC repair system catalyzes the recognition and processing of DNA lesions. A damage recognition complex composed of 2 UvrA and 2 UvrB subunits scans DNA for abnormalities. Upon binding of the UvrA(2)B(2) complex to a putative damaged site, the DNA wraps around one UvrB monomer. DNA wrap is dependent on ATP binding by UvrB and probably causes local melting of the DNA helix, facilitating insertion of UvrB beta-hairpin between the DNA strands. Then UvrB probes one DNA strand for the presence of a lesion. If a lesion is found the UvrA subunits dissociate and the UvrB-DNA preincision complex is formed. This complex is subsequently bound by UvrC and the second UvrB is released. If no lesion is found, the DNA wraps around the other UvrB subunit that will check the other stand for damage. The polypeptide is UvrABC system protein B (Thermobifida fusca (strain YX)).